The sequence spans 426 residues: MLKKLYFTVLSFIAIVGVISLYIRLSEGMKMSALTSYSSWGLWIVFYIYFIGLSAGSFLLSTMVYVFNMKQFERIGKLALFTAFFSLMAGLLFVLIDLGHPERFWHTLVYRQPNSILSWEIQFYLIYMLLIVAEIWFLMREEFAQRAQSTKGLTKLFNRTLTLGYKVPNSQQKLEFHREQSHKWMKILGIAGIPTAVGVHGGTGSLFGVVMAKEYWFSGLTPIIFLVSALVSGAALMLFLYSFFGGAKKNGDSLLKELGTLLTLFIGIDLLLMIAEFLIGLYNPIHHERMTFNEILFGDRWFIFWIGQIGMVIILPILLITISKGKRLLMGLAGLSVVLGIVCVRWILVIPAYVAPHFDGLDSAYNSSRLLYEYSPNLLEWSSSVGLIGIVILLFSITVQLVPVFNKQKEVHQTHGKPTPEIHIKA.

The next 10 helical transmembrane spans lie at 5 to 25 (LYFT…YIRL), 40 to 60 (WGLW…SFLL), 78 to 98 (LALF…LIDL), 119 to 139 (WEIQ…WFLM), 187 to 207 (ILGI…GSLF), 223 to 243 (IIFL…LYSF), 261 to 281 (LLTL…LIGL), 302 to 322 (FIFW…LITI), 330 to 350 (MGLA…ILVI), and 385 to 405 (VGLI…VPVF).

This sequence belongs to the NrfD family. The complex is composed of three subunits: SrdA, SrdB and SrdC.

The protein resides in the cell membrane. The catalysed reaction is selenite + a quinone + H2O = selenate + a quinol. Component of the respiratory selenate reductase complex, which catalyzes the reduction of selenate to selenite. This subunit probably receives electrons directly from the membrane quinone pool and transfers the electrons to the iron-sulfur clusters of SrdB. May be the membrane anchor protein subunit of the complex. This is Selenate reductase subunit C from Mesobacillus selenatarsenatis (strain DSM 18680 / JCM 14380 / FERM P-15431 / SF-1).